A 314-amino-acid chain; its full sequence is Ferrochelatase (314 aa).

Residues His184 and Glu259 each contribute to the Fe cation site.

It belongs to the ferrochelatase family.

The protein resides in the cytoplasm. It carries out the reaction heme b + 2 H(+) = protoporphyrin IX + Fe(2+). Its pathway is porphyrin-containing compound metabolism; protoheme biosynthesis; protoheme from protoporphyrin-IX: step 1/1. Its function is as follows. Catalyzes the ferrous insertion into protoporphyrin IX. The sequence is that of Ferrochelatase from Chlamydia trachomatis serovar D (strain ATCC VR-885 / DSM 19411 / UW-3/Cx).